The chain runs to 623 residues: Glutathione import ATP-binding protein GsiA (623 aa).

ABC transporter domains lie at 15–269 (VENL…RALL) and 314–564 (LRVR…RKLL). Residues 49–56 (GESGSGKS) and 357–364 (GESGSGKS) each bind ATP.

It belongs to the ABC transporter superfamily. Glutathione importer (TC 3.A.1.5.11) family. In terms of assembly, the complex is composed of two ATP-binding proteins (GsiA), two transmembrane proteins (GsiC and GsiD) and a solute-binding protein (GsiB).

The protein resides in the cell inner membrane. It catalyses the reaction glutathione(out) + ATP + H2O = glutathione(in) + ADP + phosphate + H(+). Functionally, part of the ABC transporter complex GsiABCD involved in glutathione import. Responsible for energy coupling to the transport system. The sequence is that of Glutathione import ATP-binding protein GsiA from Shigella flexneri serotype 5b (strain 8401).